Reading from the N-terminus, the 323-residue chain is Aquaporin-4 (323 aa).

Residues 1–36 (MSDGAAARRWGKCGPPCSRESIMVAFKGVWTQAFWK) are Cytoplasmic-facing. S-palmitoyl cysteine attachment occurs at residues Cys13 and Cys17. The helical transmembrane segment at 37–57 (AVTAEFLAMLIFVLLSVGSTI) threads the bilayer. At 58 to 69 (NWGGSENPLPVD) the chain is on the extracellular side. Residues 70-89 (MVLISLCFGLSIATMVQCFG) traverse the membrane as a helical segment. Over 90–93 (HISG) the chain is Cytoplasmic. Residues 94 to 101 (GHINPAVT) constitute an intramembrane region (discontinuously helical). The NPA 1 motif lies at 97 to 99 (NPA). The Cytoplasmic portion of the chain corresponds to 102 to 115 (VAMVCTRKISIAKS). Ser111 is subject to Phosphoserine; by PKG. Residues 116-136 (VFYITAQCLGAIIGAGILYLV) form a helical membrane-spanning segment. Residues 137-155 (TPPSVVGGLGVTTVHGNLT) are Extracellular-facing. An N-linked (GlcNAc...) asparagine glycan is attached at Asn153. The helical transmembrane segment at 156–176 (AGHGLLVELIITFQLVFTIFA) threads the bilayer. The Cytoplasmic portion of the chain corresponds to 177–184 (SCDSKRTD). Ser180 carries the post-translational modification Phosphoserine; by PKC. A helical transmembrane segment spans residues 185–205 (VTGSVALAIGFSVAIGHLFAI). At 206 to 208 (NYT) the chain is on the extracellular side. The segment at residues 209-222 (GASMNPARSFGPAV) is an intramembrane region (discontinuously helical). The NPA 2 signature appears at 213-215 (NPA). Residues 223-231 (IMGNWENHW) lie on the Extracellular side of the membrane. A helical transmembrane segment spans residues 232 to 252 (IYWVGPIIGAVLAGALYEYVF). The Cytoplasmic portion of the chain corresponds to 253 to 323 (CPDVELKRRL…DSSGEVLSSV (71 aa)). A phosphoserine mark is found at Ser276 and Ser285. A Phosphothreonine modification is found at Thr289. Phosphoserine is present on Ser321.

This sequence belongs to the MIP/aquaporin (TC 1.A.8) family. Homotetramer. The tetramers can form oligomeric arrays in membranes. The size of the oligomers differs between tissues and is smaller in skeletal muscle than in brain. Interaction between AQP4 oligomeric arrays in close-by cells can contribute to cell-cell adhesion. Part of a complex containing MLC1, TRPV4, HEPACAM and ATP1B1. In terms of processing, phosphorylation by PKC at Ser-180 promotes internalization from the cell membrane, reducing the conductance by 50%. Phosphorylation by PKG at Ser-111 in response to glutamate increases conductance by 40%. Post-translationally, isoform Long: Palmitoylated on its N-terminal region. Isoform 3: Not palmitoylated. In terms of tissue distribution, detected in cerebellum. Detected on pericapillary astrocyte endfeet in cerebellum, and in skeletal muscle. Detected in glial lamellae in the hypothalamus (at protein level). Abundant in mature brain cortex, cerebellum and spinal cord. Highly expressed in the ependymal cell lining the aqueductal system and over the space of the brain in contact with the subarachnoid space. Detected in paraventricular and supraoptic nuclei, the granule cell layer of the dentate gyrus and the Purkinje cell layer in the cerebellum. Only weakly detectable in eye, kidney, intestine, and lung.

It is found in the cell membrane. Its subcellular location is the basolateral cell membrane. The protein resides in the endosome membrane. The protein localises to the sarcolemma. It localises to the cell projection. The enzyme catalyses H2O(in) = H2O(out). Functionally, forms a water-specific channel. Plays an important role in brain water homeostasis and in glymphatic solute transport. Required for a normal rate of water exchange across the blood brain interface. Required for normal levels of cerebrospinal fluid influx into the brain cortex and parenchyma along paravascular spaces that surround penetrating arteries, and for normal drainage of interstitial fluid along paravenous drainage pathways. Thereby, it is required for normal clearance of solutes from the brain interstitial fluid, including soluble beta-amyloid peptides derived from APP. Plays a redundant role in urinary water homeostasis and urinary concentrating ability. This Rattus norvegicus (Rat) protein is Aquaporin-4 (Aqp4).